The following is a 192-amino-acid chain: Imidazoleglycerol-phosphate dehydratase (192 aa).

The protein belongs to the imidazoleglycerol-phosphate dehydratase family.

The protein resides in the cytoplasm. It catalyses the reaction D-erythro-1-(imidazol-4-yl)glycerol 3-phosphate = 3-(imidazol-4-yl)-2-oxopropyl phosphate + H2O. The protein operates within amino-acid biosynthesis; L-histidine biosynthesis; L-histidine from 5-phospho-alpha-D-ribose 1-diphosphate: step 6/9. The polypeptide is Imidazoleglycerol-phosphate dehydratase (Carboxydothermus hydrogenoformans (strain ATCC BAA-161 / DSM 6008 / Z-2901)).